The following is a 509-amino-acid chain: Scavenger receptor class B member 1 (509 aa).

Residues 1–11 (MGGSARARWVA) lie on the Cytoplasmic side of the membrane. Residues 12–32 (VGLGVVGLLCAVLGVVMILVM) form a helical membrane-spanning segment. At 33–440 (PSLIKQQVLK…YTQLVLMPQV (408 aa)) the chain is on the extracellular side. Residues Asn102, Asn108, Asn173, Asn212, Asn227, Asn255, Asn310, Asn330, and Asn383 are each glycosylated (N-linked (GlcNAc...) asparagine). Cys251 and Cys384 are disulfide-bonded. Residues 441–461 (LQYVQYVLLGLGGLLLLVPVI) traverse the membrane as a helical segment. Residues 462–509 (YQLRSQEKCFLFWSGSKKGSQDKEAIQAYSESLMSPAAKGTVLQEAKL) lie on the Cytoplasmic side of the membrane.

It belongs to the CD36 family. Post-translationally, N-glycosylated. In terms of processing, the six cysteines of the extracellular domain are all involved in intramolecular disulfide bonds.

It is found in the cell membrane. The protein resides in the membrane. The protein localises to the caveola. Its function is as follows. Receptor for different ligands such as phospholipids, cholesterol ester, lipoproteins, phosphatidylserine and apoptotic cells. Receptor for HDL, mediating selective uptake of cholesteryl ether and HDL-dependent cholesterol efflux. Also facilitates the flux of free and esterified cholesterol between the cell surface and apoB-containing lipoproteins and modified lipoproteins, although less efficiently than HDL. May be involved in the phagocytosis of apoptotic cells, via its phosphatidylserine binding activity. This Cricetulus griseus (Chinese hamster) protein is Scavenger receptor class B member 1 (SCARB1).